We begin with the raw amino-acid sequence, 132 residues long: Ribosome-binding factor A (132 aa).

It belongs to the RbfA family. Monomer. Binds 30S ribosomal subunits, but not 50S ribosomal subunits or 70S ribosomes.

It is found in the cytoplasm. Functionally, one of several proteins that assist in the late maturation steps of the functional core of the 30S ribosomal subunit. Associates with free 30S ribosomal subunits (but not with 30S subunits that are part of 70S ribosomes or polysomes). Required for efficient processing of 16S rRNA. May interact with the 5'-terminal helix region of 16S rRNA. The chain is Ribosome-binding factor A from Burkholderia lata (strain ATCC 17760 / DSM 23089 / LMG 22485 / NCIMB 9086 / R18194 / 383).